Consider the following 272-residue polypeptide: Phosphonates import ATP-binding protein PhnC (272 aa).

One can recognise an ABC transporter domain in the interval 2–244 (LVFDKVNRVY…IQKRLYEIEH (243 aa)). Residue 35 to 42 (GPSGAGKS) coordinates ATP.

Belongs to the ABC transporter superfamily. Phosphonates importer (TC 3.A.1.9.1) family. In terms of assembly, the complex is composed of two ATP-binding proteins (PhnC), two transmembrane proteins (PhnE) and a solute-binding protein (PhnD).

The protein localises to the cell inner membrane. It catalyses the reaction phosphonate(out) + ATP + H2O = phosphonate(in) + ADP + phosphate + H(+). In terms of biological role, part of the ABC transporter complex PhnCDE involved in phosphonates import. Responsible for energy coupling to the transport system. This Hydrogenovibrio crunogenus (strain DSM 25203 / XCL-2) (Thiomicrospira crunogena) protein is Phosphonates import ATP-binding protein PhnC.